The primary structure comprises 488 residues: E3 ubiquitin-protein ligase RNF8 (488 aa).

In terms of domain architecture, FHA spans 38–92; the sequence is VTIGRGLSVTYQLISKVCPLMISRSHCVLKQNPEGQWTIMDNKSLNGVWLNRERL. Positions 68-72 are required for interaction with PIWIL1; sequence QNPEG. The interval 141 to 164 is disordered; it reads DQRMEKHKGSRTKRKFSSPGLENL. A compositionally biased stretch (basic residues) spans 145–156; sequence EKHKGSRTKRKF. The residue at position 157 (serine 157) is a Phosphoserine. The segment at 406 to 444 adopts an RING-type zinc-finger fold; the sequence is CIICSEYFIEAVTLNCAHSFCSFCINEWMKRKVECPICR.

Belongs to the RNF8 family. As to quaternary structure, homodimer. Forms a E2-E3 ubiquitin ligase complex composed of the RNF8 homodimer and a E2 heterodimer of UBE2N and UBE2V2. Interacts with class III E2s, including UBE2E1, UBE2E2, and UBE2E3 and with UBE2N. Interacts with RXRA. Interacts (via FHA domain) with ATM-phosphorylated MDC1. Interacts (via FHA domain) with 'Thr-4829' phosphorylated HERC2 (via C-terminus). Interacts with PIWIL1; leading to sequester RNF8 in the cytoplasm. Interacts with WRAP53/TCAB1. In terms of assembly, (Microbial infection) May interact with the L.monocytogenes protein actA; however, given these errors in the sequence (AJ242721), the relevance of the interaction with actA remains to be confirmed. Autoubiquitinated through 'Lys-48' and 'Lys-63' of ubiquitin. 'Lys-63' polyubiquitination is mediated by UBE2N. 'Lys-29'-type polyubiquitination is also observed, but it doesn't require its own functional RING-type zinc finger.

Its subcellular location is the nucleus. It localises to the cytoplasm. The protein resides in the midbody. It is found in the chromosome. The protein localises to the telomere. It carries out the reaction S-ubiquitinyl-[E2 ubiquitin-conjugating enzyme]-L-cysteine + [acceptor protein]-L-lysine = [E2 ubiquitin-conjugating enzyme]-L-cysteine + N(6)-ubiquitinyl-[acceptor protein]-L-lysine.. It participates in protein modification; protein ubiquitination. Functionally, E3 ubiquitin-protein ligase that plays a key role in DNA damage signaling via 2 distinct roles: by mediating the 'Lys-63'-linked ubiquitination of histones H2A and H2AX and promoting the recruitment of DNA repair proteins at double-strand breaks (DSBs) sites, and by catalyzing 'Lys-48'-linked ubiquitination to remove target proteins from DNA damage sites. Following DNA DSBs, it is recruited to the sites of damage by ATM-phosphorylated MDC1 and catalyzes the 'Lys-63'-linked ubiquitination of histones H2A and H2AX, thereby promoting the formation of TP53BP1 and BRCA1 ionizing radiation-induced foci (IRIF). Also controls the recruitment of UIMC1-BRCC3 (RAP80-BRCC36) and PAXIP1/PTIP to DNA damage sites. Promotes the recruitment of NBN to DNA damage sites by catalyzing 'Lys-6'-linked ubiquitination of NBN. Also recruited at DNA interstrand cross-links (ICLs) sites and catalyzes 'Lys-63'-linked ubiquitination of histones H2A and H2AX, leading to recruitment of FAAP20 and Fanconi anemia (FA) complex, followed by interstrand cross-link repair. H2A ubiquitination also mediates the ATM-dependent transcriptional silencing at regions flanking DSBs in cis, a mechanism to avoid collision between transcription and repair intermediates. Promotes the formation of 'Lys-63'-linked polyubiquitin chains via interactions with the specific ubiquitin-conjugating UBE2N/UBC13 and ubiquitinates non-histone substrates such as PCNA. Substrates that are polyubiquitinated at 'Lys-63' are usually not targeted for degradation. Also catalyzes the formation of 'Lys-48'-linked polyubiquitin chains via interaction with the ubiquitin-conjugating UBE2L6/UBCH8, leading to degradation of substrate proteins such as CHEK2, JMJD2A/KDM4A and KU80/XRCC5: it is still unclear how the preference toward 'Lys-48'- versus 'Lys-63'-linked ubiquitination is regulated but it could be due to RNF8 ability to interact with specific E2 specific ligases. For instance, interaction with phosphorylated HERC2 promotes the association between RNF8 and UBE2N/UBC13 and favors the specific formation of 'Lys-63'-linked ubiquitin chains. Promotes non-homologous end joining (NHEJ) by promoting the 'Lys-48'-linked ubiquitination and degradation the of KU80/XRCC5. Following DNA damage, mediates the ubiquitination and degradation of JMJD2A/KDM4A in collaboration with RNF168, leading to unmask H4K20me2 mark and promote the recruitment of TP53BP1 at DNA damage sites. Following DNA damage, mediates the ubiquitination and degradation of POLD4/p12, a subunit of DNA polymerase delta. In the absence of POLD4, DNA polymerase delta complex exhibits higher proofreading activity. In addition to its function in damage signaling, also plays a role in higher-order chromatin structure by mediating extensive chromatin decondensation. Involved in the activation of ATM by promoting histone H2B ubiquitination, which indirectly triggers histone H4 'Lys-16' acetylation (H4K16ac), establishing a chromatin environment that promotes efficient activation of ATM kinase. Required in the testis, where it plays a role in the replacement of histones during spermatogenesis. At uncapped telomeres, promotes the joining of deprotected chromosome ends by inducing H2A ubiquitination and TP53BP1 recruitment, suggesting that it may enhance cancer development by aggravating telomere-induced genome instability in case of telomeric crisis. Promotes the assembly of RAD51 at DNA DSBs in the absence of BRCA1 and TP53BP1 Also involved in class switch recombination in immune system, via its role in regulation of DSBs repair. May be required for proper exit from mitosis after spindle checkpoint activation and may regulate cytokinesis. May play a role in the regulation of RXRA-mediated transcriptional activity. Not involved in RXRA ubiquitination by UBE2E2. The chain is E3 ubiquitin-protein ligase RNF8 from Mus musculus (Mouse).